A 557-amino-acid chain; its full sequence is Aerobic glycerol-3-phosphate dehydrogenase (557 aa).

21 to 49 (DVVIIGGGITGAGIALDASQRGMKVALVE) is a binding site for FAD.

The protein belongs to the FAD-dependent glycerol-3-phosphate dehydrogenase family. It depends on FAD as a cofactor.

Its subcellular location is the cytoplasm. The catalysed reaction is a quinone + sn-glycerol 3-phosphate = dihydroxyacetone phosphate + a quinol. It functions in the pathway polyol metabolism; glycerol degradation via glycerol kinase pathway; glycerone phosphate from sn-glycerol 3-phosphate (aerobic route): step 1/1. This Staphylococcus haemolyticus (strain JCSC1435) protein is Aerobic glycerol-3-phosphate dehydrogenase (glpD).